Reading from the N-terminus, the 373-residue chain is MSSFLPEGGCYELLTVIGKGFEDLMTVNLARYKPTGEYVTVRRINLEACSNEMVTFLQGELHVSKLFSHPNILPYGATFIADNELWVVTSFMAYGSAKDLICTHFMDGMSELAIAYILQGALKALDYIHHMGYVHRSVKASHVLISADGKVYLSGLRSNLSMISHGQRQRVVHDFPKYSIKVLPWLSPEVLQQNLQGYDAKSDIYSVGITACELANGHVPFKDMPATQMLLEKLNGTVPCLLDTSTIPAEELTMSTSRSAANSGLSESLAPSTPRTSNGDSPSHPYHRTFSPHFHHFVEQCLQRNPDMRPSASTLLNHSFFKQIKRRASEALPELLRPVTPITTFEGRQSQDHSGIFGLVTNLEELEVDDWEF.

The region spanning 11–321 is the Protein kinase domain; that stretch reads YELLTVIGKG…ASTLLNHSFF (311 aa). Over residues 255-281 the composition is skewed to polar residues; the sequence is STSRSAANSGLSESLAPSTPRTSNGDS. The segment at 255 to 288 is disordered; it reads STSRSAANSGLSESLAPSTPRTSNGDSPSHPYHR. Phosphothreonine; by LKB1 is present on threonine 361.

Belongs to the protein kinase superfamily. STE Ser/Thr protein kinase family. STE20 subfamily. As to quaternary structure, component of a trimeric complex composed of STK11/LKB1, STRAD (STRADA or STRADB) and CAB39/MO25 (CAB39/MO25alpha or CAB39L/MO25beta): the complex tethers STK11/LKB1 in the cytoplasm and stimulates its catalytic activity.

Its subcellular location is the nucleus. The protein resides in the cytoplasm. Functionally, pseudokinase which, in complex with CAB39/MO25 (CAB39/MO25alpha or CAB39L/MO25beta), binds to and activates STK11/LKB1. Adopts a closed conformation typical of active protein kinases and binds STK11/LKB1 as a pseudosubstrate, promoting conformational change of STK11/LKB1 in an active conformation. The polypeptide is STE20-related kinase adapter protein alpha (STRADA) (Bos taurus (Bovine)).